Here is a 175-residue protein sequence, read N- to C-terminus: Methylmalonyl-CoA epimerase, mitochondrial (175 aa).

The N-terminal 35 residues, 1–35 (MARVLKVAAASAAGLFPRLRTPVSTVRTSASLSSH), are a transit peptide targeting the mitochondrion. In terms of domain architecture, VOC spans 46–175 (RLNHVAVAVP…GGVLVELEQA (130 aa)). His-49 contributes to the Co(2+) binding site. At Lys-113 the chain carries N6-succinyllysine. His-121 lines the Co(2+) pocket. Lys-149 is modified (N6-acetyllysine; alternate). Lys-149 is subject to N6-succinyllysine; alternate. Glu-171 is a Co(2+) binding site.

It belongs to the methylmalonyl-CoA epimerase family.

It is found in the mitochondrion. It catalyses the reaction (R)-methylmalonyl-CoA = (S)-methylmalonyl-CoA. Methylmalonyl-CoA epimerase involved in propionyl-CoA metabolism. This chain is Methylmalonyl-CoA epimerase, mitochondrial (MCEE), found in Bos taurus (Bovine).